The chain runs to 235 residues: High mobility group protein 1.2 (235 aa).

The segment covering 1–34 has biased composition (polar residues); sequence MNSGYSANIFPSSSSPTLYQSHQLQPNPSATMYQ. The segment at 1 to 47 is disordered; the sequence is MNSGYSANIFPSSSSPTLYQSHQLQPNPSATMYQATPRDMGKPPVRG. 2 DNA-binding regions (HMG box) span residues 47 to 117 and 135 to 203; these read GKTS…AAYG and PKRA…RNYK.

This sequence belongs to the HMGB family.

Its subcellular location is the nucleus. This chain is High mobility group protein 1.2 (hmg-1.2), found in Caenorhabditis elegans.